The chain runs to 588 residues: Proline--tRNA ligase (588 aa).

It belongs to the class-II aminoacyl-tRNA synthetase family. ProS type 1 subfamily. In terms of assembly, homodimer.

The protein resides in the cytoplasm. It catalyses the reaction tRNA(Pro) + L-proline + ATP = L-prolyl-tRNA(Pro) + AMP + diphosphate. In terms of biological role, catalyzes the attachment of proline to tRNA(Pro) in a two-step reaction: proline is first activated by ATP to form Pro-AMP and then transferred to the acceptor end of tRNA(Pro). As ProRS can inadvertently accommodate and process non-cognate amino acids such as alanine and cysteine, to avoid such errors it has two additional distinct editing activities against alanine. One activity is designated as 'pretransfer' editing and involves the tRNA(Pro)-independent hydrolysis of activated Ala-AMP. The other activity is designated 'posttransfer' editing and involves deacylation of mischarged Ala-tRNA(Pro). The misacylated Cys-tRNA(Pro) is not edited by ProRS. This chain is Proline--tRNA ligase, found in Corynebacterium efficiens (strain DSM 44549 / YS-314 / AJ 12310 / JCM 11189 / NBRC 100395).